Here is a 654-residue protein sequence, read N- to C-terminus: Spindle assembly abnormal protein 6 homolog (654 aa).

The 53-residue stretch at 39 to 91 (VHRKDLVIRLTDDTDPFFLYNLVISEEDFQSLKLQQGLLVDFLAFPQKFIDLL) folds into the PISA domain. The stretch at 175-471 (TRQLHITQET…QLLKNNEKLI (297 aa)) forms a coiled coil. S509 carries the phosphoserine modification. The segment at 568-589 (ASIDGQPGAAVNRPCSNDKENG) is disordered. S612 is modified (phosphoserine). The segment covering 634 to 644 (SKPTVLPSSSS) has biased composition (low complexity). The tract at residues 634–654 (SKPTVLPSSSSAYFPGQLPSS) is disordered. Position 654 is a phosphoserine (S654).

Nine homodimers form a cartwheel structure with an internal diameter of 23 nm and radial spokes connecting to the microtubule triplets. Forms a complex with CPAP and STIL. Interacts with FBXW5. Interacts with NUP62 and TUBG1 at the centrosome. Interacts with CENATAC; the interaction increases with CENATAC acetylation. Interacts with FZR1; the interaction is regulated by CENATAC and leads to SASS6 proteasomal degradation. Ubiquitinated by the SCF(FBXW5) E3 ubiquitin-protein ligase complex during S phase, leading to its degradation and preventing centriole reduplication. Ubiquitinated by the anaphase promoting complex/cyclosome (APC/C) E3 ubiquitin-protein ligase complex, leading to its degradation and preventing centriole reduplication.

Its subcellular location is the cytoplasm. The protein localises to the cytoskeleton. The protein resides in the microtubule organizing center. It localises to the centrosome. It is found in the centriole. Its function is as follows. Central scaffolding component of the centrioles ensuring their 9-fold symmetry. Required for centrosome biogenesis and duplication. Required both for mother-centriole-dependent centriole duplication and deuterosome-dependent centriole amplification in multiciliated cells. Not required for centriole formation in embryonic stem cells but necessary to maintain centriole architecture. Required for the recruitment of STIL to the procentriole and for STIL-mediated centriole amplification. This is Spindle assembly abnormal protein 6 homolog from Mus musculus (Mouse).